The primary structure comprises 112 residues: Small capsomere-interacting protein (112 aa).

Belongs to the herpesviridae small capsomere-interacting protein family. As to quaternary structure, interacts with the major capsid protein/MCP.

The protein localises to the virion. The protein resides in the host nucleus. Participates in the assembly of the infectious particles by decorating the outer surface of the capsid shell and thus forming a layer between the capsid and the tegument. Complexes composed of the major capsid protein and small capsomere-interacting protein/SCP assemble together in the host cytoplasm and are translocated to the nucleus, where they accumulate and participate in capsid assembly. The polypeptide is Small capsomere-interacting protein (Homo sapiens (Human)).